Here is a 225-residue protein sequence, read N- to C-terminus: C-type lectin domain-containing protein 91 (225 aa).

Residues 1–21 form the signal peptide; sequence MRSTYILIIVPLIIIGGGVVA. The region spanning 85 to 215 is the C-type lectin domain; that stretch reads YSDSCYFIET…CTMAFKSICE (131 aa). 2 disulfide bridges follow: C106–C214 and C185–C206. N-linked (GlcNAc...) asparagine glycosylation is present at N217.

It is found in the secreted. This is C-type lectin domain-containing protein 91 (clec-91) from Caenorhabditis elegans.